The following is a 248-amino-acid chain: Probable N-acetylglucosaminyl-phosphatidylinositol de-N-acetylase (248 aa).

At 1–7 (MIWFWST) the chain is on the lumenal side. Residues 8–24 (LLVTAIAVLSTANESSS) form a helical membrane-spanning segment. Residues 25 to 248 (GQEKLAVESI…MSNNVLKRAT (224 aa)) are Cytoplasmic-facing.

It belongs to the PIGL family.

Its subcellular location is the endoplasmic reticulum membrane. The enzyme catalyses a 6-(N-acetyl-alpha-D-glucosaminyl)-1-(1,2-diacyl-sn-glycero-3-phospho)-1D-myo-inositol + H2O = a 6-(alpha-D-glucosaminyl)-1-(1,2-diacyl-sn-glycero-3-phospho)-1D-myo-inositol + acetate. It participates in glycolipid biosynthesis; glycosylphosphatidylinositol-anchor biosynthesis. In terms of biological role, involved in the second step of GPI biosynthesis. De-N-acetylation of N-acetylglucosaminyl-phosphatidylinositol. This chain is Probable N-acetylglucosaminyl-phosphatidylinositol de-N-acetylase (gpi12), found in Schizosaccharomyces pombe (strain 972 / ATCC 24843) (Fission yeast).